The sequence spans 958 residues: Eukaryotic translation initiation factor 3 subunit A (958 aa).

A coiled-coil region spans residues 93–123 (MHLATERAELARNQAQALEEALDVEDLEADK). Residues 316–513 (LQLIASSVVL…GLSSLVNRVL (198 aa)) enclose the PCI domain. 2 coiled-coil regions span residues 548-696 (EALS…AKRE) and 796-861 (LRSE…LRKS). Positions 804–859 (KRLQEEEEARKREEAERRKKEEAERQAKLDEIAEKQRRRMLELEEKEKREREEILR) are enriched in basic and acidic residues. The interval 804-958 (KRLQEEEEAR…SRTSWPASRR (155 aa)) is disordered. A compositionally biased stretch (low complexity) spans 877-894 (PAELGGAAPIPAAAATAP). The span at 929–942 (KPDDRPSWRDERKP) shows a compositional bias: basic and acidic residues. Residues 946–958 (GSGSRTSWPASRR) are compositionally biased toward polar residues.

Belongs to the eIF-3 subunit A family. Component of the eukaryotic translation initiation factor 3 (eIF-3) complex.

The protein resides in the cytoplasm. Its function is as follows. RNA-binding component of the eukaryotic translation initiation factor 3 (eIF-3) complex, which is involved in protein synthesis of a specialized repertoire of mRNAs and, together with other initiation factors, stimulates binding of mRNA and methionyl-tRNAi to the 40S ribosome. The eIF-3 complex specifically targets and initiates translation of a subset of mRNAs involved in cell proliferation. This Nicotiana tabacum (Common tobacco) protein is Eukaryotic translation initiation factor 3 subunit A (TIF3A1).